Consider the following 390-residue polypeptide: Probable purine permease 7 (390 aa).

A run of 10 helical transmembrane segments spans residues 42–62 (WLRVSIYVIFVLFCQPLATIL), 74–94 (TYVVTLLQLIGFPVLVLFRFF), 110–130 (SPSFTTLASVYLCTGLLVSAY), 131–151 (AYLSAVGLLYLPVSTFSLILA), 169–189 (FTPLIVSSLLLLTVSSALLVV), 205–225 (VIGFICTIGASAGIGLLLSLI), 244–264 (LAIYQSLVASCVVLIGLFASG), 286–306 (TLASAAISWQVYTLGLVGLIF), 312–332 (FSNSITAVGLPIVPVAAVIVF), and 341–361 (IFSIILAICGFLSFVYQHYLD).

Belongs to the purine permeases (TC 2.A.7.14) family.

Its subcellular location is the membrane. The polypeptide is Probable purine permease 7 (PUP7) (Arabidopsis thaliana (Mouse-ear cress)).